Here is a 349-residue protein sequence, read N- to C-terminus: MNGTEGSNFYIPMSNRTGLVRSPYDYTQYYLAEPWKFKALAFYMFLLIIFGFPINVLTLVVTAQHKKLRQPLNYILVNLAFAGTIMVIFGFTVSFYCSLVGYMALGPLGCVMEGFFATLGGQVALWSLVVLAIERYIVVCKPMGSFKFSANHAMAGIAFTWFMACSCAVPPLFGWSRYLPEGMQTSCGPDYYTLNPEYNNESYVMYMFSCHFCIPVTTIFFTYGSLVCTVKAAAAQQQESESTQKAEREVTRMVILMVLGFLFAWVPYASFAAWIFFNRGAAFSAQAMAVPAFFSKTSAVFNPIIYVLLNKQFRSCMLNTLFCGKSPLGDDESSSVSTSKTEVSSVSPA.

Topologically, residues 1–36 are extracellular; it reads MNGTEGSNFYIPMSNRTGLVRSPYDYTQYYLAEPWK. N-linked (GlcNAc...) asparagine glycosylation is found at N2 and N15. Residues 37 to 61 traverse the membrane as a helical segment; that stretch reads FKALAFYMFLLIIFGFPINVLTLVV. Over 62–73 the chain is Cytoplasmic; it reads TAQHKKLRQPLN. The chain crosses the membrane as a helical span at residues 74–99; that stretch reads YILVNLAFAGTIMVIFGFTVSFYCSL. At 100–113 the chain is on the extracellular side; sequence VGYMALGPLGCVME. The cysteines at positions 110 and 187 are disulfide-linked. The helical transmembrane segment at 114–133 threads the bilayer; that stretch reads GFFATLGGQVALWSLVVLAI. The Cytoplasmic portion of the chain corresponds to 134–152; that stretch reads ERYIVVCKPMGSFKFSANH. A helical membrane pass occupies residues 153-176; that stretch reads AMAGIAFTWFMACSCAVPPLFGWS. The Extracellular segment spans residues 177-202; it reads RYLPEGMQTSCGPDYYTLNPEYNNES. N200 is a glycosylation site (N-linked (GlcNAc...) asparagine). A helical membrane pass occupies residues 203–230; that stretch reads YVMYMFSCHFCIPVTTIFFTYGSLVCTV. Residues 231 to 252 are Cytoplasmic-facing; the sequence is KAAAAQQQESESTQKAEREVTR. A helical transmembrane segment spans residues 253 to 276; it reads MVILMVLGFLFAWVPYASFAAWIF. Residues 277–284 lie on the Extracellular side of the membrane; that stretch reads FNRGAAFS. Residues 285 to 309 form a helical membrane-spanning segment; it reads AQAMAVPAFFSKTSAVFNPIIYVLL. K296 is modified (N6-(retinylidene)lysine). At 310 to 349 the chain is on the cytoplasmic side; sequence NKQFRSCMLNTLFCGKSPLGDDESSSVSTSKTEVSSVSPA. The segment at 328-349 is disordered; it reads LGDDESSSVSTSKTEVSSVSPA. Low complexity predominate over residues 334–349; sequence SSVSTSKTEVSSVSPA.

Belongs to the G-protein coupled receptor 1 family. Opsin subfamily. In terms of processing, phosphorylated on some or all of the serine and threonine residues present in the C-terminal region. In terms of tissue distribution, retinal double cone accessory photoreceptor cell outer segments.

It localises to the membrane. Its function is as follows. Visual pigments are the light-absorbing molecules that mediate vision. They consist of an apoprotein, opsin, covalently linked to cis-retinal. This Danio rerio (Zebrafish) protein is Green-sensitive opsin-1 (opn1mw1).